A 528-amino-acid polypeptide reads, in one-letter code: U6 snRNA (guanine-N(2))-methyltransferase THUMPD2 (528 aa).

Basic and acidic residues predominate over residues 154–168 (QEVAKDHGESQEDKL). Disordered stretches follow at residues 154 to 200 (QEVA…ADAQ) and 437 to 460 (MKTL…RASS). The THUMP domain occupies 162 to 266 (ESQEDKLLQG…DAYSVVGIPL (105 aa)).

It belongs to the methyltransferase superfamily. In terms of assembly, part of the heterodimeric THUMPD2-TRM112 methyltransferase complex; this complex forms an active tRNA methyltransferase, where TRMT112 acts as an activator of the catalytic subunit THUMPD2.

The protein localises to the nucleus. The enzyme catalyses guanosine in U6 snRNA + S-adenosyl-L-methionine = N(2)-methylguanosine in U6 snRNA + S-adenosyl-L-homocysteine + H(+). Catalytic subunit of the THUMPD2-TRM112 methyltransferase complex, that specifically mediates the S-adenosyl-L-methionine-dependent N(2)-methylation of guanosine nucleotides, most probably at position 72 (m2G72), in the U6snRNA of the major spliceosome. This modification in the U6 snRNA affects the constitutive splicing efficiency of introns that have suboptimal splice sites and can impact final mRNA levels. The chain is U6 snRNA (guanine-N(2))-methyltransferase THUMPD2 from Mus musculus (Mouse).